A 161-amino-acid chain; its full sequence is Endoribonuclease YbeY (161 aa).

Residues His-121, His-125, and His-131 each coordinate Zn(2+).

Belongs to the endoribonuclease YbeY family. Zn(2+) serves as cofactor.

Its subcellular location is the cytoplasm. Single strand-specific metallo-endoribonuclease involved in late-stage 70S ribosome quality control and in maturation of the 3' terminus of the 16S rRNA. The polypeptide is Endoribonuclease YbeY (Xanthomonas campestris pv. campestris (strain 8004)).